Here is a 458-residue protein sequence, read N- to C-terminus: uncharacterized protein (458 aa).

Disordered regions lie at residues 339 to 397 (GTGY…ARIL) and 434 to 458 (YNSE…EDDC). Composition is skewed to acidic residues over residues 344–390 (SDSD…EEEP) and 436–458 (SEDE…EDDC).

This is an uncharacterized protein from Invertebrate iridescent virus 3 (IIV-3).